A 315-amino-acid polypeptide reads, in one-letter code: T cell receptor beta chain MC.7.G5 (315 aa).

An N-terminal signal peptide occupies residues 1–21 (MTIRLLCYMGFYFLGAGLMEA). Residues 22-114 (DIYQTPRYLV…TSQYLCASSE (93 aa)) form the Ig-like V-type domain. The segment at 22-114 (DIYQTPRYLV…TSQYLCASSE (93 aa)) is t cell receptor beta variable 25-1. Residues Cys42 and Cys110 are joined by a disulfide bond. Residues 46–50 (MGHDK) form a CDR1 region. The interval 68–73 (SYGVNS) is CDR2. Residue Asn72 is glycosylated (N-linked (GlcNAc...) asparagine). Residues 110–127 (CASSEARGLAEFTDTQYF) are CDR3. Residues 122–136 (TDTQYFGPGTRLTVL) form a t cell receptor beta joining 2-3 region. Positions 138 to 315 (DLKNVFPPEV…AMVKRKDSRG (178 aa)) are t cell receptor beta constant 2. The region spanning 145-254 (PEVAVFEPSE…WTQDRAKPVT (110 aa)) is the Ig-like C1-type domain. A disulfide bridge links Cys167 with Cys232. The N-linked (GlcNAc...) asparagine glycan is linked to Asn206. The connecting peptide stretch occupies residues 267–281 (CGFTSESYQQGVLSA). The chain crosses the membrane as a helical span at residues 282 to 304 (TILYEILLGKATLYAVLVSALVL). Topologically, residues 305-315 (MAMVKRKDSRG) are cytoplasmic.

In terms of assembly, disulfide-linked heterodimer with TRAV38-2DV8*01J31*01C*01 alpha chain. The alpha-beta TR associates with the transmembrane signaling CD3 coreceptor proteins to form the TR-CD3 (TCR). The assembly of alpha-beta TR heterodimers with CD3 occurs in the endoplasmic reticulum where a single alpha-beta TR heterodimer associates with one CD3D-CD3E heterodimer, one CD3G-CD3E heterodimer and one CD247 homodimer forming a stable octameric structure. CD3D-CD3E and CD3G-CD3E heterodimers preferentially associate with TR alpha and TR beta chains (via TM domain), respectively. The association of the CD247 homodimer is the last step of TCR assembly in the endoplasmic reticulum and is required for transport to the cell surface. Expressed in MR1-restricted CD8-positive T cells.

The protein resides in the cell membrane. In terms of biological role, the beta chain of TRAV38-2DV8*01J31*01C*01/TRBV25-1*01J2S3*01C2*01 alpha-beta T cell receptor (TR) clonotype that displays pan-cancer cell recognition via the invariant MR1 molecule. On CD8-positive T cell clone MC.7.G5, likely recognizes tumor-specific or -associated metabolite(s) essential for cancer cell survival, triggering killing of many cancer cell types including lung, melanoma, leukemia, colon, breast, prostate, bone and ovarian cancer cells. Mediates cancer cell cytotoxicity in an HLA-independent manner. Has no reactivity to healthy cells even stressed or infected by bacteria. Antigen recognition initiates TR-CD3 clustering on the cell surface and intracellular activation of LCK that phosphorylates the ITAM motifs of CD3G, CD3D, CD3E and CD247 enabling the recruitment of ZAP70. In turn, ZAP70 phosphorylates LAT, which recruits numerous signaling molecules to form the LAT signalosome. The LAT signalosome propagates signal branching to three major signaling pathways, the calcium, the mitogen-activated protein kinase (MAPK) kinase and the nuclear factor NF-kappa-B (NF-kB) pathways, leading to the mobilization of transcription factors that are critical for gene expression and essential for T cell differentiation into effector/memory T cells. The polypeptide is T cell receptor beta chain MC.7.G5 (Homo sapiens (Human)).